Consider the following 98-residue polypeptide: NADH-ubiquinone oxidoreductase chain 4L (98 aa).

3 helical membrane passes run 1 to 21, 29 to 49, and 61 to 81; these read MSLT…GLLM, SLLC…MAIL, and IILL…LVMV.

It belongs to the complex I subunit 4L family. In terms of assembly, core subunit of respiratory chain NADH dehydrogenase (Complex I) which is composed of 45 different subunits.

It is found in the mitochondrion inner membrane. The enzyme catalyses a ubiquinone + NADH + 5 H(+)(in) = a ubiquinol + NAD(+) + 4 H(+)(out). Its function is as follows. Core subunit of the mitochondrial membrane respiratory chain NADH dehydrogenase (Complex I) which catalyzes electron transfer from NADH through the respiratory chain, using ubiquinone as an electron acceptor. Part of the enzyme membrane arm which is embedded in the lipid bilayer and involved in proton translocation. This is NADH-ubiquinone oxidoreductase chain 4L (MT-ND4L) from Vampyressa melissa (Melissa's yellow-eared bat).